Consider the following 444-residue polypeptide: Sperm-associated antigen 4 protein (444 aa).

Residues 1 to 109 (MRRNPRPGSA…GGASEPSGSP (109 aa)) are disordered. Low complexity predominate over residues 19–36 (NFYSENSNSSHSATSGDS). 2 helical membrane-spanning segments follow: residues 137–159 (FLSLFFQVLSVFLSLVADGLVCV) and 166–188 (IRFLFTAVSLLSIFLAALWWGLL). The stretch at 204 to 241 (LSQYHHRVHSQGQQLQQLQAELSKLHKEVTSVRAAHSE) forms a coiled coil. The SUN domain occupies 267–428 (GASIDLEKTS…YRVRAHGVRI (162 aa)).

As to quaternary structure, self-associates. Interacts with ODF1. May associate with microtubules. Interacts with SUN3 and SYNE1; suggesting the formation of a LINC complexs; a SUN domain-based heterotrimer of SPAG4 and SUN3 may associate with SYNE1. Interacts with SEPT12 and LMNB1; during spermatogenesis. In terms of tissue distribution, testis specific. Exclusively expressed in spermatids.

Its subcellular location is the membrane. The protein localises to the cytoplasm. It localises to the cytoskeleton. The protein resides in the flagellum axoneme. It is found in the nucleus envelope. Its subcellular location is the nucleus inner membrane. In terms of biological role, involved in spermatogenesis. Required for sperm head formation but not required to establish and maintain general polarity of the sperm head. Required for anchoring and organization of the manchette. Required for targeting of SUN3 and probably SYNE1 through a probable SUN1:SYNE3 LINC complex to the nuclear envelope and involved in accurate posterior sperm head localization of the complex. May anchor SUN3 the nuclear envelope. Involved in maintenance of the nuclear envelope integrity. May assist the organization and assembly of outer dense fibers (ODFs), a specific structure of the sperm tail. In Rattus norvegicus (Rat), this protein is Sperm-associated antigen 4 protein (Spag4).